The sequence spans 138 residues: Nucleoside diphosphate kinase (138 aa).

6 residues coordinate ATP: Lys-9, Phe-57, Arg-85, Thr-91, Arg-102, and Asn-112. His-115 (pros-phosphohistidine intermediate) is an active-site residue.

This sequence belongs to the NDK family. In terms of assembly, homotetramer. The cofactor is Mg(2+).

Its subcellular location is the cytoplasm. The enzyme catalyses a 2'-deoxyribonucleoside 5'-diphosphate + ATP = a 2'-deoxyribonucleoside 5'-triphosphate + ADP. The catalysed reaction is a ribonucleoside 5'-diphosphate + ATP = a ribonucleoside 5'-triphosphate + ADP. In terms of biological role, major role in the synthesis of nucleoside triphosphates other than ATP. The ATP gamma phosphate is transferred to the NDP beta phosphate via a ping-pong mechanism, using a phosphorylated active-site intermediate. This is Nucleoside diphosphate kinase from Trichlorobacter lovleyi (strain ATCC BAA-1151 / DSM 17278 / SZ) (Geobacter lovleyi).